Here is a 458-residue protein sequence, read N- to C-terminus: tRNA modification GTPase MnmE (458 aa).

(6S)-5-formyl-5,6,7,8-tetrahydrofolate is bound by residues Arg22, Glu86, and Arg125. A TrmE-type G domain is found at 221–379 (GIRTVILGRP…LEQTITEMFF (159 aa)). Position 231 (Asn231) interacts with K(+). Residues 231–236 (NAGKSS), 250–256 (TEIAGTT), and 275–278 (DTAG) contribute to the GTP site. Residue Ser235 participates in Mg(2+) binding. K(+) is bound by residues Thr250, Ile252, and Thr255. Thr256 is a binding site for Mg(2+). A (6S)-5-formyl-5,6,7,8-tetrahydrofolate-binding site is contributed by Lys458.

It belongs to the TRAFAC class TrmE-Era-EngA-EngB-Septin-like GTPase superfamily. TrmE GTPase family. As to quaternary structure, homodimer. Heterotetramer of two MnmE and two MnmG subunits. K(+) serves as cofactor.

It localises to the cytoplasm. Exhibits a very high intrinsic GTPase hydrolysis rate. Involved in the addition of a carboxymethylaminomethyl (cmnm) group at the wobble position (U34) of certain tRNAs, forming tRNA-cmnm(5)s(2)U34. This chain is tRNA modification GTPase MnmE, found in Lachnoclostridium phytofermentans (strain ATCC 700394 / DSM 18823 / ISDg) (Clostridium phytofermentans).